The primary structure comprises 191 residues: Glycerol-3-phosphate acyltransferase (191 aa).

The next 5 membrane-spanning stretches (helical) occupy residues Leu10–Ala30, Phe57–Val77, Phe84–Phe104, Phe118–Leu138, and Tyr158–Ile178.

Belongs to the PlsY family. In terms of assembly, probably interacts with PlsX.

The protein resides in the cell inner membrane. It carries out the reaction an acyl phosphate + sn-glycerol 3-phosphate = a 1-acyl-sn-glycero-3-phosphate + phosphate. It functions in the pathway lipid metabolism; phospholipid metabolism. Its function is as follows. Catalyzes the transfer of an acyl group from acyl-phosphate (acyl-PO(4)) to glycerol-3-phosphate (G3P) to form lysophosphatidic acid (LPA). This enzyme utilizes acyl-phosphate as fatty acyl donor, but not acyl-CoA or acyl-ACP. This chain is Glycerol-3-phosphate acyltransferase, found in Neorickettsia sennetsu (strain ATCC VR-367 / Miyayama) (Ehrlichia sennetsu).